The chain runs to 419 residues: UDP-N-acetylglucosamine 1-carboxyvinyltransferase (419 aa).

22 to 23 (KN) lines the phosphoenolpyruvate pocket. Position 91 (R91) interacts with UDP-N-acetyl-alpha-D-glucosamine. C115 acts as the Proton donor in catalysis. At C115 the chain carries 2-(S-cysteinyl)pyruvic acid O-phosphothioketal. Residues 120-124 (RPVDL), 160-163 (KVSV), D305, and V327 each bind UDP-N-acetyl-alpha-D-glucosamine.

Belongs to the EPSP synthase family. MurA subfamily.

The protein localises to the cytoplasm. It catalyses the reaction phosphoenolpyruvate + UDP-N-acetyl-alpha-D-glucosamine = UDP-N-acetyl-3-O-(1-carboxyvinyl)-alpha-D-glucosamine + phosphate. It functions in the pathway cell wall biogenesis; peptidoglycan biosynthesis. Its function is as follows. Cell wall formation. Adds enolpyruvyl to UDP-N-acetylglucosamine. The protein is UDP-N-acetylglucosamine 1-carboxyvinyltransferase of Salmonella schwarzengrund (strain CVM19633).